The following is a 524-amino-acid chain: Probable cytochrome P450 12c1, mitochondrial (524 aa).

A heme-binding site is contributed by cysteine 470.

It belongs to the cytochrome P450 family. Heme is required as a cofactor.

The protein resides in the mitochondrion membrane. In Drosophila melanogaster (Fruit fly), this protein is Probable cytochrome P450 12c1, mitochondrial (Cyp12c1).